The primary structure comprises 183 residues: RFKKIRRLGALPGLTSKRPRSGSDLKNQLRSGKRSQYRIRLEEKQKLRFHYGLTERQLLKYVHIAGKAKGSTGQILLQLLEMRLDNILFRLGMASTIPGARQLVNHRHILVNGRIVDIPSYRCKPRDIITTNNKQRSKALIQNFIASSPHQEELPNHLTIDPFQYKGLVNQIIDSKWIGLKIN.

Residues 82–143 (MRLDNILFRL…KQRSKALIQN (62 aa)) form the S4 RNA-binding domain.

The protein belongs to the universal ribosomal protein uS4 family. As to quaternary structure, part of the 30S ribosomal subunit. Contacts protein S5. The interaction surface between S4 and S5 is involved in control of translational fidelity.

It is found in the plastid. The protein resides in the chloroplast. Functionally, one of the primary rRNA binding proteins, it binds directly to 16S rRNA where it nucleates assembly of the body of the 30S subunit. In terms of biological role, with S5 and S12 plays an important role in translational accuracy. In Crocosmia sp. (strain Porto Alegre 034), this protein is Small ribosomal subunit protein uS4c (rps4).